The sequence spans 413 residues: 1-deoxy-D-xylulose 5-phosphate reductoisomerase (413 aa).

Threonine 13, glycine 14, serine 15, isoleucine 16, lysine 40, asparagine 41, and asparagine 127 together coordinate NADPH. Position 128 (lysine 128) interacts with 1-deoxy-D-xylulose 5-phosphate. Glutamate 129 is a binding site for NADPH. Aspartate 153 contributes to the Mn(2+) binding site. Positions 154, 155, 184, and 207 each coordinate 1-deoxy-D-xylulose 5-phosphate. Glutamate 155 lines the Mn(2+) pocket. Glycine 213 is an NADPH binding site. Serine 220, asparagine 225, lysine 226, and glutamate 229 together coordinate 1-deoxy-D-xylulose 5-phosphate. Glutamate 229 is a Mn(2+) binding site.

This sequence belongs to the DXR family. Requires Mg(2+) as cofactor. The cofactor is Mn(2+).

The enzyme catalyses 2-C-methyl-D-erythritol 4-phosphate + NADP(+) = 1-deoxy-D-xylulose 5-phosphate + NADPH + H(+). It functions in the pathway isoprenoid biosynthesis; isopentenyl diphosphate biosynthesis via DXP pathway; isopentenyl diphosphate from 1-deoxy-D-xylulose 5-phosphate: step 1/6. Its function is as follows. Catalyzes the NADPH-dependent rearrangement and reduction of 1-deoxy-D-xylulose-5-phosphate (DXP) to 2-C-methyl-D-erythritol 4-phosphate (MEP). This Nitrosomonas eutropha (strain DSM 101675 / C91 / Nm57) protein is 1-deoxy-D-xylulose 5-phosphate reductoisomerase.